We begin with the raw amino-acid sequence, 270 residues long: Dermonecrotic toxin LsaSicTox-alphaIB1av (270 aa).

The active site involves His2. Residues Glu22 and Asp24 each contribute to the Mg(2+) site. His38 (nucleophile) is an active-site residue. 2 cysteine pairs are disulfide-bonded: Cys42–Cys48 and Cys44–Cys187. Residue Asp82 coordinates Mg(2+).

The protein belongs to the arthropod phospholipase D family. Class II subfamily. Mg(2+) is required as a cofactor. Expressed by the venom gland.

It is found in the secreted. It catalyses the reaction an N-(acyl)-sphingosylphosphocholine = an N-(acyl)-sphingosyl-1,3-cyclic phosphate + choline. The catalysed reaction is an N-(acyl)-sphingosylphosphoethanolamine = an N-(acyl)-sphingosyl-1,3-cyclic phosphate + ethanolamine. The enzyme catalyses a 1-acyl-sn-glycero-3-phosphocholine = a 1-acyl-sn-glycero-2,3-cyclic phosphate + choline. It carries out the reaction a 1-acyl-sn-glycero-3-phosphoethanolamine = a 1-acyl-sn-glycero-2,3-cyclic phosphate + ethanolamine. Functionally, dermonecrotic toxins cleave the phosphodiester linkage between the phosphate and headgroup of certain phospholipids (sphingolipid and lysolipid substrates), forming an alcohol (often choline) and a cyclic phosphate. This toxin acts on sphingomyelin (SM). It may also act on ceramide phosphoethanolamine (CPE), lysophosphatidylcholine (LPC) and lysophosphatidylethanolamine (LPE), but not on lysophosphatidylserine (LPS), and lysophosphatidylglycerol (LPG). It acts by transphosphatidylation, releasing exclusively cyclic phosphate products as second products. Induces dermonecrosis, hemolysis, increased vascular permeability, edema, inflammatory response, and platelet aggregation. This Loxosceles sabina (Tucson recluse spider) protein is Dermonecrotic toxin LsaSicTox-alphaIB1av.